An 81-amino-acid chain; its full sequence is MTDLFSSPDHTLDALGLRCPEPVMMVRKTVRNMQPGETLLIIADDPATTRDIPGFCTFMEHELVAKETDGLPYRYLIRKGG.

Residue Cys19 is the Cysteine persulfide intermediate of the active site.

This sequence belongs to the sulfur carrier protein TusA family. As to quaternary structure, interacts with IscS.

The protein resides in the cytoplasm. The protein operates within tRNA modification. Its function is as follows. Sulfur carrier protein involved in sulfur trafficking in the cell. Part of a sulfur-relay system required for 2-thiolation during synthesis of 2-thiouridine of the modified wobble base 5-methylaminomethyl-2-thiouridine (mnm(5)s(2)U) in tRNA. Interacts with IscS and stimulates its cysteine desulfurase activity. Accepts an activated sulfur from IscS, which is then transferred to TusD, and thus determines the direction of sulfur flow from IscS to 2-thiouridine formation. Also appears to be involved in sulfur transfer for the biosynthesis of molybdopterin. The sequence is that of Sulfur carrier protein TusA from Shigella boydii serotype 18 (strain CDC 3083-94 / BS512).